A 231-amino-acid chain; its full sequence is uncharacterized protein (231 aa).

3 consecutive transmembrane segments (helical) span residues 6–26 (IKLI…YKYI), 39–59 (NIVS…STFS), and 66–86 (FCFQ…GYAF).

It is found in the cell membrane. This is an uncharacterized protein from Rickettsia prowazekii (strain Madrid E).